The sequence spans 276 residues: Large ribosomal subunit protein uL2 (276 aa).

Residues 219–276 (TVRGSAMNPNDHPHGGGEGRSPIGRPSPVTPWGKPALGYKTRKKNKHSDKFIVTGRKR) form a disordered region.

The protein belongs to the universal ribosomal protein uL2 family. Part of the 50S ribosomal subunit. Forms a bridge to the 30S subunit in the 70S ribosome.

Its function is as follows. One of the primary rRNA binding proteins. Required for association of the 30S and 50S subunits to form the 70S ribosome, for tRNA binding and peptide bond formation. It has been suggested to have peptidyltransferase activity; this is somewhat controversial. Makes several contacts with the 16S rRNA in the 70S ribosome. The protein is Large ribosomal subunit protein uL2 of Alkaliphilus metalliredigens (strain QYMF).